A 630-amino-acid polypeptide reads, in one-letter code: ATP-dependent zinc metalloprotease FtsH 2 (630 aa).

The Cytoplasmic segment spans residues 1–8 (MNNNPNRR). The chain crosses the membrane as a helical span at residues 9 to 29 (GSLIGPLFIYFILAMLIFMSI). Topologically, residues 30-110 (SQLNTSNITE…YIQNTGASWW (81 aa)) are periplasmic. The helical transmembrane segment at 111-131 (VTMLIYMLPLIILMFFWFWMF) threads the bilayer. The Cytoplasmic portion of the chain corresponds to 132-630 (RRSGTGEGIP…KETNLFVSYA (499 aa)). 203 to 210 (GPPGTGKT) is an ATP binding site. Position 425 (H425) interacts with Zn(2+). E426 is a catalytic residue. Zn(2+) is bound by residues H429 and D502.

In the central section; belongs to the AAA ATPase family. It in the C-terminal section; belongs to the peptidase M41 family. In terms of assembly, homohexamer. It depends on Zn(2+) as a cofactor.

The protein resides in the cell inner membrane. Acts as a processive, ATP-dependent zinc metallopeptidase for both cytoplasmic and membrane proteins. Plays a role in the quality control of integral membrane proteins. In Petrotoga mobilis (strain DSM 10674 / SJ95), this protein is ATP-dependent zinc metalloprotease FtsH 2.